Here is a 228-residue protein sequence, read N- to C-terminus: ATP synthase subunit a (228 aa).

Helical transmembrane passes span 19–39 (AIYI…AVAV), 81–101 (LIAT…IPGF), 107–127 (SLNL…FEGI), 136–156 (FAGF…IEVI), 178–198 (LFLL…PYAL), and 204–224 (ILQA…AVVV).

It belongs to the ATPase A chain family. As to quaternary structure, F-type ATPases have 2 components, CF(1) - the catalytic core - and CF(0) - the membrane proton channel. CF(1) has five subunits: alpha(3), beta(3), gamma(1), delta(1), epsilon(1). CF(0) has three main subunits: a(1), b(2) and c(9-12). The alpha and beta chains form an alternating ring which encloses part of the gamma chain. CF(1) is attached to CF(0) by a central stalk formed by the gamma and epsilon chains, while a peripheral stalk is formed by the delta and b chains.

The protein localises to the cell inner membrane. Functionally, key component of the proton channel; it plays a direct role in the translocation of protons across the membrane. The chain is ATP synthase subunit a from Campylobacter hominis (strain ATCC BAA-381 / DSM 21671 / CCUG 45161 / LMG 19568 / NCTC 13146 / CH001A).